The sequence spans 583 residues: Phytoene desaturase (583 aa).

The N-terminal stretch at 1–20 is a signal peptide; that stretch reads MAPPKHVIIIGAGAGGTATA. Residues 531 to 551 form a helical membrane-spanning segment; sequence IIWFLLIALFAATLVLFIAFP.

The protein belongs to the carotenoid/retinoid oxidoreductase family. It depends on NAD(+) as a cofactor.

It localises to the membrane. The enzyme catalyses 15-cis-phytoene + 5 A = all-trans-3,4-didehydrolycopene + 5 AH2. The protein operates within carotenoid biosynthesis; lycopene biosynthesis. Phytoene desaturase involved in the carotenoid biosynthesis pathway. Converts phytoene into 3,4-didehydrolycopene via the intermediary of phytofluene, zeta-carotene, neurosporene and lycopene, by introducing up to five double bonds into phytoene. This is Phytoene desaturase (carB) from Phycomyces blakesleeanus (strain ATCC 8743b / DSM 1359 / FGSC 10004 / NBRC 33097 / NRRL 1555).